The sequence spans 326 residues: Lipopolysaccharide heptosyltransferase 1 (326 aa).

Residues Thr187, Thr188, Lys192, Glu222, and Met242 each coordinate ADP. Positions 187, 188, 192, 222, 242, 261, 262, 263, and 266 each coordinate ADP-L-glycero-beta-D-manno-heptose. Thr262 and Gly263 together coordinate ADP.

It belongs to the glycosyltransferase 9 family. In terms of assembly, monomer.

The protein resides in the cell inner membrane. It carries out the reaction an alpha-Kdo-(2-&gt;4)-alpha-Kdo-(2-&gt;6)-lipid A + ADP-L-glycero-beta-D-manno-heptose = an L-alpha-D-Hep-(1-&gt;5)-[alpha-Kdo-(2-&gt;4)]-alpha-Kdo-(2-&gt;6)-lipid A + ADP + H(+). The enzyme catalyses alpha-Kdo-(2-&gt;4)-alpha-Kdo-(2-&gt;6)-lipid A (E. coli) + ADP-L-glycero-beta-D-manno-heptose = L-alpha-D-Hep-(1-&gt;5)-[alpha-Kdo-(2-&gt;4)]-alpha-Kdo-(2-&gt;6)-lipid A (E. coli) + ADP + H(+). It functions in the pathway bacterial outer membrane biogenesis; LPS core biosynthesis. Inhibited by ADP-L-glycero-beta-D-gluco-2-deoxy-2-fluoro-heptose (ADP-2F-heptose), a non-cleavable analog of the substrate ADP-L-glycero-beta-D-manno-heptose. Glycosyltransferase involved in the biosynthesis of the core oligosaccharide region of lipopolysaccharide (LPS). Catalyzes the addition of the first heptose unit to one 3-deoxy-D-manno-octulosonic acid (Kdo) residue of the Kdo2-lipid A module. The polypeptide is Lipopolysaccharide heptosyltransferase 1 (Escherichia coli O18:K1:H7 (strain RS218 / NMEC)).